A 345-amino-acid chain; its full sequence is GDSL esterase/lipase At1g23500 (345 aa).

An N-terminal signal peptide occupies residues 1 to 24 (MNFSLLSTMLMALSSVCLFFVGYA). Ser-42 serves as the catalytic Nucleophile. A glycan (N-linked (GlcNAc...) asparagine) is linked at Asn-103. Residues Asp-320 and His-323 contribute to the active site.

This sequence belongs to the 'GDSL' lipolytic enzyme family.

It is found in the secreted. The sequence is that of GDSL esterase/lipase At1g23500 from Arabidopsis thaliana (Mouse-ear cress).